The primary structure comprises 257 residues: tRNA-cytidine(32) 2-sulfurtransferase (257 aa).

The PP-loop motif motif lies at 37–42 (SGGKDS). The [4Fe-4S] cluster site is built by Cys-112, Cys-115, and Cys-202.

The protein belongs to the TtcA family. Homodimer. It depends on Mg(2+) as a cofactor. [4Fe-4S] cluster is required as a cofactor.

It localises to the cytoplasm. The enzyme catalyses cytidine(32) in tRNA + S-sulfanyl-L-cysteinyl-[cysteine desulfurase] + AH2 + ATP = 2-thiocytidine(32) in tRNA + L-cysteinyl-[cysteine desulfurase] + A + AMP + diphosphate + H(+). The protein operates within tRNA modification. In terms of biological role, catalyzes the ATP-dependent 2-thiolation of cytidine in position 32 of tRNA, to form 2-thiocytidine (s(2)C32). The sulfur atoms are provided by the cysteine/cysteine desulfurase (IscS) system. This is tRNA-cytidine(32) 2-sulfurtransferase from Geobacter metallireducens (strain ATCC 53774 / DSM 7210 / GS-15).